Consider the following 63-residue polypeptide: Large ribosomal subunit protein bL32 (63 aa).

Residues 1-16 are compositionally biased toward basic residues; that stretch reads MAVPKRKTSRMKRGFR. The interval 1-22 is disordered; sequence MAVPKRKTSRMKRGFRRSADAI.

The protein belongs to the bacterial ribosomal protein bL32 family.

The protein is Large ribosomal subunit protein bL32 of Beijerinckia indica subsp. indica (strain ATCC 9039 / DSM 1715 / NCIMB 8712).